Consider the following 226-residue polypeptide: Endonuclease V (226 aa).

Residues Asp42 and Asp110 each contribute to the Mg(2+) site.

This sequence belongs to the endonuclease V family. The cofactor is Mg(2+).

It is found in the cytoplasm. The catalysed reaction is Endonucleolytic cleavage at apurinic or apyrimidinic sites to products with a 5'-phosphate.. Its function is as follows. DNA repair enzyme involved in the repair of deaminated bases. Selectively cleaves double-stranded DNA at the second phosphodiester bond 3' to a deoxyinosine leaving behind the intact lesion on the nicked DNA. This chain is Endonuclease V, found in Thermus thermophilus (strain ATCC BAA-163 / DSM 7039 / HB27).